The sequence spans 163 residues: HTH-type transcriptional regulator IscR (163 aa).

Residues Arg2–Asn131 form the HTH rrf2-type domain. The segment at residues Leu28 to Lys51 is a DNA-binding region (H-T-H motif). [2Fe-2S] cluster is bound by residues Cys92, Cys98, and Cys104. Positions Asp140 to Arg149 are enriched in basic and acidic residues. Residues Asp140–Ala163 form a disordered region.

It depends on [2Fe-2S] cluster as a cofactor.

Functionally, regulates the transcription of several operons and genes involved in the biogenesis of Fe-S clusters and Fe-S-containing proteins. This is HTH-type transcriptional regulator IscR from Citrobacter koseri (strain ATCC BAA-895 / CDC 4225-83 / SGSC4696).